The chain runs to 267 residues: Undecaprenyl-diphosphatase (267 aa).

The next 7 membrane-spanning stretches (helical) occupy residues 4 to 24 (LYALILGIIEGLTEFLPISST), 41 to 61 (FWKSFLIIIQLGSILAVIFVF), 69 to 89 (LDIWLKLAVGFFPTGVIGLFV), 96 to 116 (LFNGWVVVGMLIFGGVVFILI), 173 to 193 (AAEFSFLLAIPTMIIATAYSI), 207 to 227 (IPLGIGFITAFIVAVLVIKFF), and 239 to 259 (FGIYRIILGFVFFYLYYSGIL).

The protein belongs to the UppP family.

The protein localises to the cell inner membrane. The catalysed reaction is di-trans,octa-cis-undecaprenyl diphosphate + H2O = di-trans,octa-cis-undecaprenyl phosphate + phosphate + H(+). Functionally, catalyzes the dephosphorylation of undecaprenyl diphosphate (UPP). Confers resistance to bacitracin. This chain is Undecaprenyl-diphosphatase, found in Campylobacter jejuni subsp. jejuni serotype O:23/36 (strain 81-176).